The primary structure comprises 234 residues: Orotidine 5'-phosphate decarboxylase (234 aa).

Residues Asp11, Lys33, 60-69, Thr120, Arg181, Gln190, Gly210, and Arg211 each bind substrate; that span reads DLKFHDIPNT. Catalysis depends on Lys62, which acts as the Proton donor.

This sequence belongs to the OMP decarboxylase family. Type 1 subfamily. In terms of assembly, homodimer.

The enzyme catalyses orotidine 5'-phosphate + H(+) = UMP + CO2. Its pathway is pyrimidine metabolism; UMP biosynthesis via de novo pathway; UMP from orotate: step 2/2. Its function is as follows. Catalyzes the decarboxylation of orotidine 5'-monophosphate (OMP) to uridine 5'-monophosphate (UMP). The sequence is that of Orotidine 5'-phosphate decarboxylase from Shewanella sediminis (strain HAW-EB3).